A 979-amino-acid polypeptide reads, in one-letter code: Receptor-type tyrosine-protein phosphatase-like N (979 aa).

An N-terminal signal peptide occupies residues 1 to 34 (MRLPGRPGGPGGSGGLRVLLCLLLLGSRPGGCNA). Residues 35 to 131 (ISAHGCLFDR…HPRDRSGLVP (97 aa)) are RESP18 homology domain. Over 35–575 (ISAHGCLFDR…RPAHSTSPMR (541 aa)) the chain is Lumenal. An intrachain disulfide couples Cys-53 to Cys-62. Positions 113–127 (IPRLRPPEPHPRDRS) are enriched in basic and acidic residues. Disordered stretches follow at residues 113-171 (IPRL…GAGS), 248-272 (GSKG…PAQL), 285-332 (SQVP…EQPD), and 391-466 (EQVQ…STRP). 2 positions are modified to phosphoserine: Ser-308 and Ser-309. Positions 400–409 (EPPPPMPSLP) are enriched in pro residues. The interval 449-575 (SPLGQNQPTM…RPAHSTSPMR (127 aa)) is sufficient for dimerization of proICA512. Residues 451–466 (LGQNQPTMAGQPSTRP) show a composition bias toward polar residues. Asn-506 and Asn-524 each carry an N-linked (GlcNAc...) asparagine glycan. A helical transmembrane segment spans residues 576–600 (SVLLTLVALAGVAGLLVALAVALCV). The tract at residues 601–732 (RQHARQRDKE…PNTCATAQGE (132 aa)) is sufficient for dimerization of proICA512. Residues 601–979 (RQHARQRDKE…VNAILKALPQ (379 aa)) are Cytoplasmic-facing. The disordered stretch occupies residues 643–680 (NRAEGPPEPSRVSSVSSQFSDAAQASPSSHSSTPSWCE). Positions 652–677 (SRVSSVSSQFSDAAQASPSSHSSTPS) are enriched in low complexity. Residues 709-969 (LAKEWQALCA…EFALTAVAEE (261 aa)) form the Tyrosine-protein phosphatase domain. Lys-754 is covalently cross-linked (Glycyl lysine isopeptide (Lys-Gly) (interchain with G-Cter in SUMO)).

It belongs to the protein-tyrosine phosphatase family. Receptor class 8 subfamily. As to quaternary structure, homodimer; shown for the unprocessed protein (proICA512) in the endoplasmic reticulum and resolved during protein maturation as ICA512-TMF seems to be predominantly monomeric in secretory granules; however, ICA512-CCF interacts with ICA512-TMF disrupting the ICA512-TMF:SNTB2 complex. The isolated lumenal RESP18 homology domain has been shown to form disulfide-linked homooligomers. Interacts (via cytoplasmic domain) with phosphorylated SNTB2; this protects PTPRN against cleavage by CAPN1 to produce ICA512-CCF. Dephosphorylation of SNTB2 upon insulin stimulation disrupts the interaction and results in PTPRN cleavage. Interacts with SNX19. ICA512-CCF interacts with PIAS4; in the nucleus. Interacts with STAT5B (phosphorylated); down-regulated by ICA512-CCF sumoylation; ICA512-CCF prevents STAT5B dephosphorylation; ICA512-CCF mediates interaction of STAT5B with PIAS4. Interacts (via RESP18 homology domain) with insulin and proinsulin. Interacts with PTPRN2, PTPRA and PTPRE. N-glycosylated. In terms of processing, O-glycosylated. Post-translationally, subject to proteolytic cleavage at multiple sites. Subject to cleavage on a pair of basic residues. On exocytosis of secretory granules in pancreatic beta-cells ICA512-TMF is transiently inserted in the plasma-membrane and cleaved by mu-type calpain CPN1 to yield ICA512-CCF. Sumoylated at two sites including Lys-754. Sumoylation decreases interaction with STAT5. Detected in pituitary (at protein level).

The protein localises to the membrane. It localises to the cytoplasmic vesicle. The protein resides in the secretory vesicle membrane. Its subcellular location is the perikaryon. It is found in the cell projection. The protein localises to the axon. It localises to the synapse. The protein resides in the cell membrane. Its subcellular location is the endosome. It is found in the nucleus. Its function is as follows. Plays a role in vesicle-mediated secretory processes. Required for normal accumulation of secretory vesicles in hippocampus, pituitary and pancreatic islets. Required for the accumulation of normal levels of insulin-containing vesicles and preventing their degradation. Plays a role in insulin secretion in response to glucose stimuli. Required for normal accumulation of the neurotransmitters norepinephrine, dopamine and serotonin in the brain. In females, but not in males, required for normal accumulation and secretion of pituitary hormones, such as luteinizing hormone (LH) and follicle-stimulating hormone (FSH). Required to maintain normal levels of renin expression and renin release. Seems to lack intrinsic enzyme activity. May regulate catalytic active protein-tyrosine phosphatases such as PTPRA through dimerization. In terms of biological role, ICA512-TMF regulates dynamics and exocytosis of insulin secretory granules (SGs); binding of ICA512-TMF to SNTB2/beta-2-syntrophin is proposed to restrain SGs mobility and exocytosis by tethering them to the actin cytoskeleton depending on UTRN; the function is inhibited by cytoplasmic ICA512-CFF dimerizing with ICA512-TMF and displacing SNTB2. ICA512-CCF translocated to the nucleus promotes expression of insulin and other granule-related genes; the function implicates binding to and regulating activity of STAT5B probably by preventing its dephosphorylation and potentially by inducing its sumoylation by recruiting PIAS4. Enhances pancreatic beta-cell proliferation by converging with signaling by STAT5B and STAT3. ICA512-CCF located in the cytoplasm regulates dynamics and exocytosis of insulin secretory granules (SGs) by dimerizing with ICA512-TMF and displacing SNTB2 thus enhancing SGs mobility and exocytosis. The sequence is that of Receptor-type tyrosine-protein phosphatase-like N (PTPRN) from Bos taurus (Bovine).